The primary structure comprises 156 residues: Endoribonuclease YbeY (156 aa).

Zn(2+) is bound by residues His-122, His-126, and His-132.

Belongs to the endoribonuclease YbeY family. It depends on Zn(2+) as a cofactor.

It localises to the cytoplasm. Single strand-specific metallo-endoribonuclease involved in late-stage 70S ribosome quality control and in maturation of the 3' terminus of the 16S rRNA. The polypeptide is Endoribonuclease YbeY (Symbiobacterium thermophilum (strain DSM 24528 / JCM 14929 / IAM 14863 / T)).